We begin with the raw amino-acid sequence, 315 residues long: Glycine--tRNA ligase alpha subunit (315 aa).

This sequence belongs to the class-II aminoacyl-tRNA synthetase family. As to quaternary structure, tetramer of two alpha and two beta subunits.

It is found in the cytoplasm. The enzyme catalyses tRNA(Gly) + glycine + ATP = glycyl-tRNA(Gly) + AMP + diphosphate. This is Glycine--tRNA ligase alpha subunit from Pseudomonas entomophila (strain L48).